The sequence spans 254 residues: DNA repair protein RecO (254 aa).

The protein belongs to the RecO family.

Functionally, involved in DNA repair and RecF pathway recombination. The polypeptide is DNA repair protein RecO (Rhodopseudomonas palustris (strain BisB18)).